Here is a 100-residue protein sequence, read N- to C-terminus: MEKRDFKEQLKKTAHLARLYLTPEEEELYAKQLQDILDYFKKLQEVDTSNIEPMAHVLSLSNIWREDEPKGSISQEEAFKNAPEIENLGFKIPRIIKREE.

It belongs to the GatC family. In terms of assembly, heterotrimer of A, B and C subunits.

It carries out the reaction L-glutamyl-tRNA(Gln) + L-glutamine + ATP + H2O = L-glutaminyl-tRNA(Gln) + L-glutamate + ADP + phosphate + H(+). The catalysed reaction is L-aspartyl-tRNA(Asn) + L-glutamine + ATP + H2O = L-asparaginyl-tRNA(Asn) + L-glutamate + ADP + phosphate + 2 H(+). Allows the formation of correctly charged Asn-tRNA(Asn) or Gln-tRNA(Gln) through the transamidation of misacylated Asp-tRNA(Asn) or Glu-tRNA(Gln) in organisms which lack either or both of asparaginyl-tRNA or glutaminyl-tRNA synthetases. The reaction takes place in the presence of glutamine and ATP through an activated phospho-Asp-tRNA(Asn) or phospho-Glu-tRNA(Gln). This chain is Aspartyl/glutamyl-tRNA(Asn/Gln) amidotransferase subunit C, found in Dictyoglomus turgidum (strain DSM 6724 / Z-1310).